A 104-amino-acid polypeptide reads, in one-letter code: uncharacterized protein (104 aa).

This is an uncharacterized protein from Invertebrate iridescent virus 3 (IIV-3).